The chain runs to 187 residues: UPF0301 protein BCI_0481 (187 aa).

The protein belongs to the UPF0301 (AlgH) family.

In Baumannia cicadellinicola subsp. Homalodisca coagulata, this protein is UPF0301 protein BCI_0481.